A 360-amino-acid chain; its full sequence is Protein phosphatase 1 regulatory subunit 7 (360 aa).

The disordered stretch occupies residues 1–64 (MAAERGAGQQ…GEEDPEEEHE (64 aa)). Ala2 is modified (N-acetylalanine). Residues Ser12, Ser24, Ser27, Ser44, and Ser47 each carry the phosphoserine modification. The span at 17 to 34 (EVDRRVESEESGDEEGKK) shows a compositional bias: basic and acidic residues. Residues 53–63 (ERGEEDPEEEH) are compositionally biased toward acidic residues. 11 LRR repeats span residues 77-98 (DAED…EVLK), 99-120 (KVKT…EELQ), 121-142 (SLRE…EALT), 143-164 (ELEI…DKLT), 165-186 (RLKK…SNLH), 187-208 (QLQM…DTLT), 209-230 (NLES…DALT), 231-252 (NLTV…QNLV), 253-274 (NLRE…ENNN), 275-296 (KLTM…SHLT), and 297-318 (ELQE…DELK). The residue at position 322 (Ser322) is a Phosphoserine. The region spanning 331-360 (NPLQKDPQYRRKVMLALPSVRQIDATFVRF) is the LRRCT domain.

The protein belongs to the SDS22 family. Interacts with PPP1CA, PPP1CB and PPP1CC/PPP1G isoform 1. As to expression, widely expressed.

The protein resides in the nucleus. Regulatory subunit of protein phosphatase 1. The protein is Protein phosphatase 1 regulatory subunit 7 (PPP1R7) of Homo sapiens (Human).